The primary structure comprises 499 residues: Cysteine--tRNA ligase (499 aa).

C30 provides a ligand contact to Zn(2+). Residues P32–N42 carry the 'HIGH' region motif. Residues C221, H246, and E250 each contribute to the Zn(2+) site. The 'KMSKS' region motif lies at K279–S283. K282 lines the ATP pocket.

The protein belongs to the class-I aminoacyl-tRNA synthetase family. In terms of assembly, monomer. It depends on Zn(2+) as a cofactor.

Its subcellular location is the cytoplasm. The enzyme catalyses tRNA(Cys) + L-cysteine + ATP = L-cysteinyl-tRNA(Cys) + AMP + diphosphate. In Cereibacter sphaeroides (strain ATCC 17023 / DSM 158 / JCM 6121 / CCUG 31486 / LMG 2827 / NBRC 12203 / NCIMB 8253 / ATH 2.4.1.) (Rhodobacter sphaeroides), this protein is Cysteine--tRNA ligase.